Here is a 272-residue protein sequence, read N- to C-terminus: Imidazole glycerol phosphate synthase subunit HisF (272 aa).

Catalysis depends on residues Asp-11 and Asp-130.

The protein belongs to the HisA/HisF family. As to quaternary structure, heterodimer of HisH and HisF.

The protein localises to the cytoplasm. The enzyme catalyses 5-[(5-phospho-1-deoxy-D-ribulos-1-ylimino)methylamino]-1-(5-phospho-beta-D-ribosyl)imidazole-4-carboxamide + L-glutamine = D-erythro-1-(imidazol-4-yl)glycerol 3-phosphate + 5-amino-1-(5-phospho-beta-D-ribosyl)imidazole-4-carboxamide + L-glutamate + H(+). It functions in the pathway amino-acid biosynthesis; L-histidine biosynthesis; L-histidine from 5-phospho-alpha-D-ribose 1-diphosphate: step 5/9. Functionally, IGPS catalyzes the conversion of PRFAR and glutamine to IGP, AICAR and glutamate. The HisF subunit catalyzes the cyclization activity that produces IGP and AICAR from PRFAR using the ammonia provided by the HisH subunit. This is Imidazole glycerol phosphate synthase subunit HisF from Methanococcus maripaludis (strain DSM 14266 / JCM 13030 / NBRC 101832 / S2 / LL).